Consider the following 429-residue polypeptide: MSQYQVVKGARDIFPDEIVRWHYVEDVVHRLASLYGYSEIRTPVFEYTELFQRSIGTTTDIVGKEMFSFLPDPQGRSITLRPEMTAGVMRAVLQKNLLSTAPIHKLFYLSELFRKERPQAGRQRQFSQFGAELLGVSSPAAVAEVITFMMQVFETLGIRGLKLRINTLGDSSDRARYREILRAYLAPFYDRLDLASRERFEKNPLRILDSKNPDMQEIIEGAPTLHDSLSHEALEDFEKVRFYLDSRSIAYDIDYRLVRGLDYYCHTAFEVTSPELGAQDAIGGGGRYDGLAKELGSSGDVPASGFAAGMERVLITMEKQGLFAALRPSGPKVYVVAQQHALLDHALQVAYRLRREGISTEVDLAGRSMKAQMRDANRMRACFALFIGEDEVVSGSYALKNLVTADQTAQSIETIIEMLNQYSGAEQGS.

This sequence belongs to the class-II aminoacyl-tRNA synthetase family. As to quaternary structure, homodimer.

It is found in the cytoplasm. It carries out the reaction tRNA(His) + L-histidine + ATP = L-histidyl-tRNA(His) + AMP + diphosphate + H(+). This Chlorobium phaeobacteroides (strain DSM 266 / SMG 266 / 2430) protein is Histidine--tRNA ligase.